We begin with the raw amino-acid sequence, 147 residues long: UPF0306 protein YhbP (147 aa).

It belongs to the UPF0306 family.

The chain is UPF0306 protein YhbP from Escherichia coli O6:K15:H31 (strain 536 / UPEC).